Here is a 1894-residue protein sequence, read N- to C-terminus: Plexin-A2 (1894 aa).

The signal sequence occupies residues 1–34 (MEQRRFYLRAMQADNLSVVLLSVAWLLLARGTTG). N-linked (GlcNAc...) asparagine glycans are attached at residues asparagine 15 and asparagine 76. The 474-residue stretch at 35 to 508 (MPQYSTFHSE…SERQVTRVPV (474 aa)) folds into the Sema domain. Residues 35-1237 (MPQYSTFHSE…VISDSLLTLP (1203 aa)) are Extracellular-facing. 2 cysteine pairs are disulfide-bonded: cysteine 94–cysteine 103 and cysteine 129–cysteine 137. N-linked (GlcNAc...) asparagine glycosylation is found at asparagine 163 and asparagine 327. 8 cysteine pairs are disulfide-bonded: cysteine 284/cysteine 405, cysteine 300/cysteine 356, cysteine 374/cysteine 393, cysteine 511/cysteine 528, cysteine 517/cysteine 559, cysteine 520/cysteine 537, cysteine 531/cysteine 543, and cysteine 594/cysteine 613. Asparagine 598, asparagine 696, and asparagine 756 each carry an N-linked (GlcNAc...) asparagine glycan. 4 consecutive IPT/TIG domains span residues 858-951 (PQIT…QYTF), 954-1037 (PSVL…QFEY), 1041-1139 (PRVQ…KFIY), and 1143-1228 (PTFE…SVSV). Asparagine 1180 and asparagine 1205 each carry an N-linked (GlcNAc...) asparagine glycan. Residues 1238–1258 (AIISIAAGGSLLLIIVIIVLI) traverse the membrane as a helical segment. Topologically, residues 1259 to 1894 (AYKRKSREND…HLINAMSIES (636 aa)) are cytoplasmic. Positions 1261 to 1310 (KRKSRENDLTLKRLQMQMDNLESRVALECKEAFAELQTDINELTSDLDRS) form a coiled coil. Serine 1612 carries the phosphoserine modification.

The protein belongs to the plexin family. Homodimer. Interacts with RND1. Interacts directly with NRP1 and NRP2. The PLXNA2 homodimer interacts with a SEMA6A homodimer, giving rise to a heterotetramer.

It is found in the cell membrane. Coreceptor for SEMA3A and SEMA6A. Necessary for signaling by SEMA6A and class 3 semaphorins and subsequent remodeling of the cytoskeleton. Plays a role in axon guidance, invasive growth and cell migration. Class 3 semaphorins bind to a complex composed of a neuropilin and a plexin. The plexin modulates the affinity of the complex for specific semaphorins, and its cytoplasmic domain is required for the activation of down-stream signaling events in the cytoplasm. This is Plexin-A2 (Plxna2) from Mus musculus (Mouse).